A 39-amino-acid chain; its full sequence is Photosystem II reaction center protein Y (39 aa).

Residues 7 to 25 traverse the membrane as a helical segment; sequence LLIVLLPILAAAGWAVFNI.

This sequence belongs to the PsbY family. As to quaternary structure, PSII is composed of 1 copy each of membrane proteins PsbA, PsbB, PsbC, PsbD, PsbE, PsbF, PsbH, PsbI, PsbJ, PsbK, PsbL, PsbM, PsbT, PsbX, PsbY, PsbZ, Psb30/Ycf12, peripheral proteins PsbO, CyanoQ (PsbQ), PsbU, PsbV and a large number of cofactors. It forms dimeric complexes.

The protein resides in the cellular thylakoid membrane. In terms of biological role, loosely associated component of the core of photosystem II (PSII), it is not always seen in crystals. PSII is a light-driven water plastoquinone oxidoreductase, using light energy to abstract electrons from H(2)O, generating a proton gradient subsequently used for ATP formation. The polypeptide is Photosystem II reaction center protein Y (Trichodesmium erythraeum (strain IMS101)).